We begin with the raw amino-acid sequence, 489 residues long: Rhamnulokinase (489 aa).

13–17 provides a ligand contact to ATP; sequence ASSGR. A disulfide bond links Cys-68 and Cys-222. Residues Gly-83 and 236 to 238 each bind substrate; that span reads HDT. The active-site Proton acceptor is Asp-237. Residue Thr-259 participates in ATP binding. Asn-296 provides a ligand contact to substrate. Gln-304 contributes to the ATP binding site. Cys-353 and Cys-370 are joined by a disulfide. Gly-402 contributes to the ATP binding site. An intrachain disulfide couples Cys-413 to Cys-417.

It belongs to the rhamnulokinase family. As to quaternary structure, monomer. The cofactor is Mg(2+).

It carries out the reaction L-rhamnulose + ATP = L-rhamnulose 1-phosphate + ADP + H(+). Its pathway is carbohydrate degradation; L-rhamnose degradation; glycerone phosphate from L-rhamnose: step 2/3. In terms of biological role, involved in the catabolism of L-rhamnose (6-deoxy-L-mannose). Catalyzes the transfer of the gamma-phosphate group from ATP to the 1-hydroxyl group of L-rhamnulose to yield L-rhamnulose 1-phosphate. This chain is Rhamnulokinase, found in Escherichia coli (strain SE11).